A 681-amino-acid chain; its full sequence is Peroxisomal acyl-coenzyme A oxidase 2 (681 aa).

Phosphoserine occurs at positions 3 and 9. Threonine 13 is modified (phosphothreonine). N6-succinyllysine occurs at positions 66, 137, 453, and 561. The Microbody targeting signal signature appears at 679 to 681 (SKL).

The protein belongs to the acyl-CoA oxidase family. As to quaternary structure, homodimer. The cofactor is FAD. In terms of tissue distribution, present in all tissues tested: heart, brain, placenta, lung, liver, skeletal muscle, kidney and pancreas. Most abundant in heart, liver and kidney.

Its subcellular location is the peroxisome. The enzyme catalyses (25R)-3alpha,7alpha,12alpha-trihydroxy-5beta-cholestan-26-oyl-CoA + A + H2O = (24R,25R)-3alpha,7alpha,12alpha,24-tetrahydroxy-5beta-cholestan-26-oyl-CoA + AH2. It catalyses the reaction (25S)-3alpha,7alpha,12alpha-trihydroxy-5beta-cholestan-26-oyl-CoA + O2 = (24E)-3alpha,7alpha,12alpha-trihydroxy-5beta-cholest-24-en-26-oyl-CoA + H2O2. Functionally, oxidizes the CoA esters of the bile acid intermediates di- and tri-hydroxycholestanoic acids. Capable of oxidizing short as well as long chain 2-methyl branched fatty acids. The protein is Peroxisomal acyl-coenzyme A oxidase 2 of Homo sapiens (Human).